The chain runs to 311 residues: Putative S-adenosyl-L-methionine-dependent methyltransferase MMAR_0358 (311 aa).

Residues aspartate 132 and 161 to 162 (DL) contribute to the S-adenosyl-L-methionine site.

Belongs to the UPF0677 family.

Functionally, exhibits S-adenosyl-L-methionine-dependent methyltransferase activity. The protein is Putative S-adenosyl-L-methionine-dependent methyltransferase MMAR_0358 of Mycobacterium marinum (strain ATCC BAA-535 / M).